Reading from the N-terminus, the 593-residue chain is Cyclin-dependent kinase-like 3 (593 aa).

A Protein kinase domain is found at 4 to 286 (YETLGKVGEG…STDLLHHDYF (283 aa)). ATP-binding positions include 10–18 (VGEGSYGTV) and Lys-33. Residues 45–51 (KIATREI) carry the [NKR]KIAxRE motif. Catalysis depends on Asp-125, which acts as the Proton acceptor. Phosphothreonine is present on Thr-158. Tyr-160 carries the phosphotyrosine modification. A compositionally biased stretch (basic and acidic residues) spans 368–403 (GKGDVPDLKKTESEGEHRQQGTAEDTHPTSLDRKPS). The tract at residues 368 to 512 (GKGDVPDLKK…NDQIASGNKR (145 aa)) is disordered. A compositionally biased stretch (low complexity) spans 436–452 (NLTSSNLLAANPSSNLS). 2 stretches are compositionally biased toward polar residues: residues 468 to 491 (SSQT…QVQT) and 499 to 508 (RTGQNDQIAS).

The protein belongs to the protein kinase superfamily. CMGC Ser/Thr protein kinase family. CDC2/CDKX subfamily. As to expression, highly expressed in brain, and to a lower extent in heart and testis.

The protein localises to the nucleus. It localises to the cytoplasm. The catalysed reaction is L-seryl-[protein] + ATP = O-phospho-L-seryl-[protein] + ADP + H(+). It carries out the reaction L-threonyl-[protein] + ATP = O-phospho-L-threonyl-[protein] + ADP + H(+). The protein is Cyclin-dependent kinase-like 3 of Rattus norvegicus (Rat).